Reading from the N-terminus, the 164-residue chain is RNA pyrophosphohydrolase (164 aa).

Positions 12–158 (RYRQCAGVML…KREVYRAVVK (147 aa)) constitute a Nudix hydrolase domain. The Nudix box signature appears at 47–68 (GGIDPGETQQEAAMRELEEETG).

Belongs to the Nudix hydrolase family. RppH subfamily. Requires a divalent metal cation as cofactor.

Accelerates the degradation of transcripts by removing pyrophosphate from the 5'-end of triphosphorylated RNA, leading to a more labile monophosphorylated state that can stimulate subsequent ribonuclease cleavage. The sequence is that of RNA pyrophosphohydrolase from Erythrobacter litoralis (strain HTCC2594).